A 652-amino-acid polypeptide reads, in one-letter code: Zinc finger protein 503 (652 aa).

Residues 1-11 show a composition bias toward polar residues; that stretch reads MSTAPSLSALR. Residues 1–72 are disordered; sequence MSTAPSLSAL…HAVPPSDPLR (72 aa). Residues 16-32 show a composition bias toward gly residues; it reads SGGGGGGGGGGGSGGGS. Serine 107 carries the post-translational modification Phosphoserine. Disordered regions lie at residues 126-283 and 296-338; these read SQIG…GVPA and INVD…SSVL. The segment covering 135–144 has biased composition (low complexity); that stretch reads PSSKLSSVAS. 2 stretches are compositionally biased toward gly residues: residues 145 to 157 and 194 to 209; these read NGGG…NGAG and GGGG…GGGV. Lysine 213 carries the post-translational modification N6-acetyllysine. Over residues 221–230 the composition is skewed to polar residues; that stretch reads ATCQPFTPRT. Positions 231-244 are enriched in low complexity; the sequence is GSPSSSASACSPGG. A phosphoserine mark is found at serine 235 and serine 241. The segment covering 254-263 has biased composition (basic and acidic residues); sequence EGKDDKKDPE. The segment covering 264-283 has biased composition (gly residues); the sequence is AGGGGSSKGSGGASADGVPA. Residues 314–336 show a composition bias toward low complexity; sequence GSDCGGSSSSSSGSGPSAPTSSS. Residues 520–548 form a C2H2-type zinc finger; the sequence is HICNWVSANGPCDKRFATSEELLSHLRTH. Arginine 642 is subject to Omega-N-methylarginine.

Belongs to the Elbow/Noc family.

The protein localises to the nucleus. Its function is as follows. May function as a transcriptional repressor. In Mus musculus (Mouse), this protein is Zinc finger protein 503 (Znf503).